We begin with the raw amino-acid sequence, 431 residues long: Adenylosuccinate synthetase (431 aa).

GTP-binding positions include 12 to 18 (GDEGKGK) and 40 to 42 (GHT). Aspartate 13 acts as the Proton acceptor in catalysis. The Mg(2+) site is built by aspartate 13 and glycine 40. IMP-binding positions include 13-16 (DEGK), 38-41 (NAGH), threonine 131, arginine 145, glutamine 225, threonine 240, and arginine 304. Histidine 41 functions as the Proton donor in the catalytic mechanism. Residue 300–306 (TTTGRKR) coordinates substrate. Residues arginine 306, 332 to 334 (KLD), and 414 to 416 (STS) contribute to the GTP site.

The protein belongs to the adenylosuccinate synthetase family. Homodimer. It depends on Mg(2+) as a cofactor.

The protein localises to the cytoplasm. It catalyses the reaction IMP + L-aspartate + GTP = N(6)-(1,2-dicarboxyethyl)-AMP + GDP + phosphate + 2 H(+). The protein operates within purine metabolism; AMP biosynthesis via de novo pathway; AMP from IMP: step 1/2. Its function is as follows. Plays an important role in the de novo pathway of purine nucleotide biosynthesis. Catalyzes the first committed step in the biosynthesis of AMP from IMP. This chain is Adenylosuccinate synthetase, found in Dinoroseobacter shibae (strain DSM 16493 / NCIMB 14021 / DFL 12).